The chain runs to 461 residues: Alkaline phosphatase 4 (461 aa).

Residues 1 to 41 (MKKMSLFQNMKSKLLPIAAVSVLTAGIFAGAELQQTEKASA) form the signal peptide. D58 is a binding site for Mg(2+). A Zn(2+)-binding site is contributed by D58. S108 functions as the Phosphoserine intermediate in the catalytic mechanism. T161 and E282 together coordinate Mg(2+). Positions 287, 291, 329, 330, and 423 each coordinate Zn(2+).

Belongs to the alkaline phosphatase family. As to quaternary structure, monomer. The cofactor is Mg(2+). Requires Zn(2+) as cofactor.

It carries out the reaction a phosphate monoester + H2O = an alcohol + phosphate. The sequence is that of Alkaline phosphatase 4 (phoA) from Bacillus subtilis (strain 168).